The chain runs to 535 residues: T-complex protein 1 subunit epsilon (535 aa).

This sequence belongs to the TCP-1 chaperonin family. In terms of assembly, heterooligomeric complex of about 850 to 900 kDa that forms two stacked rings, 12 to 16 nm in diameter.

The protein resides in the cytoplasm. Functionally, molecular chaperone; assists the folding of proteins upon ATP hydrolysis. Known to play a role, in vitro, in the folding of actin and tubulin. In Arabidopsis thaliana (Mouse-ear cress), this protein is T-complex protein 1 subunit epsilon.